The primary structure comprises 566 residues: Glutamate--tRNA ligase (566 aa).

Residues 105–115 carry the 'HIGH' region motif; sequence PNPDGPIHLGN.

Belongs to the class-I aminoacyl-tRNA synthetase family. Glutamate--tRNA ligase type 2 subfamily.

It localises to the cytoplasm. The catalysed reaction is tRNA(Glu) + L-glutamate + ATP = L-glutamyl-tRNA(Glu) + AMP + diphosphate. In terms of biological role, catalyzes the attachment of glutamate to tRNA(Glu) in a two-step reaction: glutamate is first activated by ATP to form Glu-AMP and then transferred to the acceptor end of tRNA(Glu). The sequence is that of Glutamate--tRNA ligase from Sulfurisphaera tokodaii (strain DSM 16993 / JCM 10545 / NBRC 100140 / 7) (Sulfolobus tokodaii).